Consider the following 544-residue polypeptide: Chaperonin GroEL (544 aa).

ATP is bound by residues 29-32, 86-90, Gly-413, 476-478, and Asp-492; these read TLGP, DGTTT, and NAA.

It belongs to the chaperonin (HSP60) family. In terms of assembly, forms a cylinder of 14 subunits composed of two heptameric rings stacked back-to-back. Interacts with the co-chaperonin GroES.

The protein localises to the cytoplasm. It catalyses the reaction ATP + H2O + a folded polypeptide = ADP + phosphate + an unfolded polypeptide.. Functionally, together with its co-chaperonin GroES, plays an essential role in assisting protein folding. The GroEL-GroES system forms a nano-cage that allows encapsulation of the non-native substrate proteins and provides a physical environment optimized to promote and accelerate protein folding. This is Chaperonin GroEL from Halalkalibacterium halodurans (strain ATCC BAA-125 / DSM 18197 / FERM 7344 / JCM 9153 / C-125) (Bacillus halodurans).